We begin with the raw amino-acid sequence, 573 residues long: NADH-ubiquinone oxidoreductase chain 5 (573 aa).

Transmembrane regions (helical) follow at residues 4–24 (ISFI…LYYL), 44–64 (IVMT…VLMI), 85–105 (FIML…SPNL), 106–126 (VSIL…VIYF), 147–167 (VALL…YIFY), 170–190 (VMQN…AAMT), 212–234 (SALV…FNIV), 239–259 (WLGQ…GLGA), 268–288 (IIAL…SMGF), 294–314 (FHLL…GAII), 337–357 (SACF…AGFY), 377–396 (FLYF…LVYY), 422–442 (LGLL…IFPF), 452–472 (LKML…LISI), 487–507 (LTLF…GMIF), and 552–572 (LKIY…FLLF).

The protein belongs to the complex I subunit 5 family.

Its subcellular location is the mitochondrion inner membrane. It catalyses the reaction a ubiquinone + NADH + 5 H(+)(in) = a ubiquinol + NAD(+) + 4 H(+)(out). In terms of biological role, core subunit of the mitochondrial membrane respiratory chain NADH dehydrogenase (Complex I) that is believed to belong to the minimal assembly required for catalysis. Complex I functions in the transfer of electrons from NADH to the respiratory chain. The immediate electron acceptor for the enzyme is believed to be ubiquinone. This Drosophila yakuba (Fruit fly) protein is NADH-ubiquinone oxidoreductase chain 5 (mt:ND5).